Reading from the N-terminus, the 189-residue chain is Group XIIA secretory phospholipase A2 (189 aa).

The N-terminal stretch at 1-22 (MALLSRPALTLLLLLMAAVVRC) is a signal peptide. Residues Gly-88, Pro-90, and Phe-92 each coordinate Ca(2+). The active site involves His-110. Asp-111 provides a ligand contact to Ca(2+). Residue Asp-125 is part of the active site.

The cofactor is Ca(2+). As to expression, abundantly expressed in heart, skeletal muscle, kidney, liver and pancreas.

The protein localises to the secreted. The protein resides in the cytoplasm. It catalyses the reaction a 1,2-diacyl-sn-glycero-3-phosphocholine + H2O = a 1-acyl-sn-glycero-3-phosphocholine + a fatty acid + H(+). Functionally, PA2 catalyzes the calcium-dependent hydrolysis of the 2-acyl groups in 3-sn-phosphoglycerides. Does not exhibit detectable activity toward sn-2-arachidonoyl- or linoleoyl-phosphatidylcholine or -phosphatidylethanolamine. The polypeptide is Group XIIA secretory phospholipase A2 (PLA2G12A) (Homo sapiens (Human)).